A 339-amino-acid chain; its full sequence is Fructose-1,6-bisphosphatase, cytosolic (339 aa).

Residues Glu70, Glu99, Asp120, Leu122, and Asp123 each coordinate Mg(2+). Substrate is bound by residues 123 to 126 (DGSS), Asn214, Tyr246, Tyr266, and Lys276. Glu282 provides a ligand contact to Mg(2+).

The protein belongs to the FBPase class 1 family. The cofactor is Mg(2+).

It is found in the cytoplasm. It catalyses the reaction beta-D-fructose 1,6-bisphosphate + H2O = beta-D-fructose 6-phosphate + phosphate. The chain is Fructose-1,6-bisphosphatase, cytosolic from Brassica napus (Rape).